Consider the following 74-residue polypeptide: Guanine nucleotide-binding protein G(T) subunit gamma-T1 (74 aa).

Residue cysteine 71 is modified to Cysteine methyl ester. The S-farnesyl cysteine moiety is linked to residue cysteine 71. Positions 72–74 are cleaved as a propeptide — removed in mature form; it reads VIS.

Belongs to the G protein gamma family. G proteins are composed of 3 units, alpha, beta and gamma. In terms of tissue distribution, retinal rod outer segment.

The protein resides in the cell membrane. Its function is as follows. Guanine nucleotide-binding proteins (G proteins) are involved as a modulator or transducer in various transmembrane signaling systems. The beta and gamma chains are required for the GTPase activity, for replacement of GDP by GTP, and for G protein-effector interaction. In Mus musculus (Mouse), this protein is Guanine nucleotide-binding protein G(T) subunit gamma-T1 (Gngt1).